Here is a 698-residue protein sequence, read N- to C-terminus: Probable xyloglucan glycosyltransferase 2 (698 aa).

Transmembrane regions (helical) follow at residues 124–144 (GFLA…WNGW) and 190–210 (ILLF…CFWI). Aspartate 272 is an active-site residue. Substrate is bound by residues aspartate 331 and aspartate 333. Aspartate 425 is a catalytic residue. 4 consecutive transmembrane segments (helical) span residues 503–523 (LILP…TMFV), 528–548 (LPVW…ILPS), 653–668 (LALS…RSLL), and 673–693 (IHFY…LDLI).

Belongs to the glycosyltransferase 2 family. Plant cellulose synthase-like C subfamily.

The protein resides in the golgi apparatus membrane. Functionally, probable beta-1,4-glucan synthase rather involved in the synthesis of the xyloglucan backbone than cellulose. Seems to work simultaneously with xyloglucan 6-xylosyltransferase. Xyloglucan is a noncellulosic polysaccharides of plant cell wall and consists of a glucan backbone substituted by xylose, galactose and fucose. The chain is Probable xyloglucan glycosyltransferase 2 (CSLC2) from Oryza sativa subsp. japonica (Rice).